Consider the following 142-residue polypeptide: Small ribosomal subunit protein uS9c (142 aa).

The protein belongs to the universal ribosomal protein uS9 family.

It is found in the plastid. It localises to the chloroplast. The protein is Small ribosomal subunit protein uS9c (rps9) of Stigeoclonium helveticum (Green alga).